The chain runs to 437 residues: Protein arginine methyltransferase NDUFAF7 homolog, mitochondrial (437 aa).

A disordered region spans residues 21–49 (RPNLGATGTPKMEPPKEQPEASSKAESGH).

This sequence belongs to the NDUFAF7 family.

Its subcellular location is the mitochondrion. The catalysed reaction is L-arginyl-[protein] + 2 S-adenosyl-L-methionine = N(omega),N(omega)'-dimethyl-L-arginyl-[protein] + 2 S-adenosyl-L-homocysteine + 2 H(+). Functionally, arginine methyltransferase involved in the assembly or stability of mitochondrial NADH:ubiquinone oxidoreductase complex (complex I). This Drosophila melanogaster (Fruit fly) protein is Protein arginine methyltransferase NDUFAF7 homolog, mitochondrial.